A 533-amino-acid polypeptide reads, in one-letter code: Glucose-6-phosphate exchanger SLC37A1 (533 aa).

A helical membrane pass occupies residues 18–38 (QWYRAFIFILTFLLYASFHLS). N-linked (GlcNAc...) asparagine glycosylation is present at Asn-81. The next 4 helical transmembrane spans lie at 100 to 120 (GALDYSFLCAYAVGMYLSGII), 129 to 149 (YLTFGMLASGAFTALFGLGYF), 157 to 177 (FYVVTQVINGLVQTTGWPSVV), and 222 to 242 (SFVVPGAIVAAMGIVCFLFLI). Asn-263 is a glycosylation site (N-linked (GlcNAc...) asparagine). The next 7 membrane-spanning stretches (helical) occupy residues 304–324 (VVILPGDGGSGTAAISFTGAL), 334–354 (LCLLFAKLVSYTFLFWLPLYI), 366–386 (GELSTLFDVGGIFGGILAGVI), 394–414 (ASTCGLMLLLAAPTLYIFSTV), 423–443 (IAMLLLSGALVSGPYTLITTA), 466–486 (AIIDGTGSVGAALGPLLAGLL), and 490–510 (GWSNVFYMLMFADACALLFLI).

This sequence belongs to the major facilitator superfamily. Organophosphate:Pi antiporter (OPA) (TC 2.A.1.4) family. Expressed in numerous tissues, with highest expression in pancreas, kidney, bone marrow, spleen, liver, small intestine, as well as in fetal brain, liver and spleen.

It is found in the endoplasmic reticulum membrane. It catalyses the reaction D-glucose 6-phosphate(in) + phosphate(out) = D-glucose 6-phosphate(out) + phosphate(in). With respect to regulation, inhibited by vanadate but not by chlorogenic acid. Inorganic phosphate and glucose-6-phosphate antiporter. May transport cytoplasmic glucose-6-phosphate into the lumen of the endoplasmic reticulum and translocate inorganic phosphate into the opposite direction. Independent of a lumenal glucose-6-phosphatase. May not play a role in homeostatic regulation of blood glucose levels. This Homo sapiens (Human) protein is Glucose-6-phosphate exchanger SLC37A1.